The chain runs to 414 residues: CCA-adding enzyme (414 aa).

ATP is bound by residues G8 and R11. Residues G8 and R11 each contribute to the CTP site. Mg(2+) contacts are provided by D21 and D23. The ATP site is built by R91, R137, and R140. Residues R91, R137, and R140 each coordinate CTP.

It belongs to the tRNA nucleotidyltransferase/poly(A) polymerase family. Bacterial CCA-adding enzyme type 2 subfamily. Requires Mg(2+) as cofactor.

It carries out the reaction a tRNA precursor + 2 CTP + ATP = a tRNA with a 3' CCA end + 3 diphosphate. The enzyme catalyses a tRNA with a 3' CCA end + 2 CTP + ATP = a tRNA with a 3' CCACCA end + 3 diphosphate. Functionally, catalyzes the addition and repair of the essential 3'-terminal CCA sequence in tRNAs without using a nucleic acid template. Adds these three nucleotides in the order of C, C, and A to the tRNA nucleotide-73, using CTP and ATP as substrates and producing inorganic pyrophosphate. tRNA 3'-terminal CCA addition is required both for tRNA processing and repair. Also involved in tRNA surveillance by mediating tandem CCA addition to generate a CCACCA at the 3' terminus of unstable tRNAs. While stable tRNAs receive only 3'-terminal CCA, unstable tRNAs are marked with CCACCA and rapidly degraded. This is CCA-adding enzyme from Buchnera aphidicola subsp. Acyrthosiphon pisum (strain 5A).